The sequence spans 104 residues: Small ribosomal subunit protein uS10 (104 aa).

The protein belongs to the universal ribosomal protein uS10 family. As to quaternary structure, part of the 30S ribosomal subunit.

Its function is as follows. Involved in the binding of tRNA to the ribosomes. The polypeptide is Small ribosomal subunit protein uS10 (Thermoplasma acidophilum (strain ATCC 25905 / DSM 1728 / JCM 9062 / NBRC 15155 / AMRC-C165)).